The primary structure comprises 213 residues: Octanoyltransferase (213 aa).

Positions 32 to 207 (ESTLDEIWLV…NILALLNNPD (176 aa)) constitute a BPL/LPL catalytic domain. Residues 71–78 (RGGQVTYH), 138–140 (SLG), and 151–153 (GLA) contribute to the substrate site. The active-site Acyl-thioester intermediate is the cysteine 169.

Belongs to the LipB family.

It is found in the cytoplasm. The enzyme catalyses octanoyl-[ACP] + L-lysyl-[protein] = N(6)-octanoyl-L-lysyl-[protein] + holo-[ACP] + H(+). Its pathway is protein modification; protein lipoylation via endogenous pathway; protein N(6)-(lipoyl)lysine from octanoyl-[acyl-carrier-protein]: step 1/2. Catalyzes the transfer of endogenously produced octanoic acid from octanoyl-acyl-carrier-protein onto the lipoyl domains of lipoate-dependent enzymes. Lipoyl-ACP can also act as a substrate although octanoyl-ACP is likely to be the physiological substrate. This chain is Octanoyltransferase, found in Escherichia coli (strain SMS-3-5 / SECEC).